A 419-amino-acid chain; its full sequence is L-rhamnose isomerase (419 aa).

3 residues coordinate Mn(2+): histidine 262, aspartate 294, and aspartate 296.

The protein belongs to the rhamnose isomerase family. As to quaternary structure, homotetramer. Mn(2+) is required as a cofactor.

The protein resides in the cytoplasm. It catalyses the reaction L-rhamnopyranose = L-rhamnulose. Its pathway is carbohydrate degradation; L-rhamnose degradation; glycerone phosphate from L-rhamnose: step 1/3. In terms of biological role, catalyzes the interconversion of L-rhamnose and L-rhamnulose. This is L-rhamnose isomerase from Escherichia coli O157:H7.